Here is a 168-residue protein sequence, read N- to C-terminus: Profilin-3 (168 aa).

Residues 14–36 (LSLEHSDKPQRRSRAKVKKKKKT) form a disordered region. The segment covering 24-36 (RRSRAKVKKKKKT) has biased composition (basic residues).

It belongs to the profilin family. Occurs in many kinds of cells as a complex with monomeric actin in a 1:1 ratio. Binding to the poly-proline motif of formins induces formation of oligomers through the N-terminal hydrophobic residues of PRF3. Expressed in roots, rosette leaves, cauline leaves, stems and flowers.

The protein resides in the cytoplasm. It is found in the cytoskeleton. Binds to actin monomers and regulates the organization of the actin cytoskeleton. Can increase the critical concentration (Cc) of actin assembly in vitro. Acts as a downstream effector of the hydrogen sulfide signaling to regulate the assembly and depolymerization of F-actin. At high concentrations, profilin prevents the polymerization of actin, whereas it enhances it at low concentrations. Binding to the poly-proline motif of formin induces oligomerization of PRF3. PRF3 oligomers inhibit formin-mediated actin assembly to modulate plant immunity triggered by pathogen-associated molecular patterns (PAMPs). The chain is Profilin-3 from Arabidopsis thaliana (Mouse-ear cress).